Consider the following 309-residue polypeptide: HPr kinase/phosphorylase (309 aa).

Residues H138 and K159 contribute to the active site. 153-160 (GQSGVGKS) is a binding site for ATP. Residue S160 coordinates Mg(2+). Residue D177 is the Proton acceptor; for phosphorylation activity. Proton donor; for dephosphorylation activity of the active site. Positions 201-210 (LEIRGLGIIN) are important for the catalytic mechanism of both phosphorylation and dephosphorylation. E202 lines the Mg(2+) pocket. R243 is an active-site residue. Residues 264–269 (PVRPGR) are important for the catalytic mechanism of dephosphorylation.

The protein belongs to the HPrK/P family. As to quaternary structure, homohexamer. Mg(2+) serves as cofactor.

The catalysed reaction is [HPr protein]-L-serine + ATP = [HPr protein]-O-phospho-L-serine + ADP + H(+). It catalyses the reaction [HPr protein]-O-phospho-L-serine + phosphate + H(+) = [HPr protein]-L-serine + diphosphate. In terms of biological role, catalyzes the ATP- as well as the pyrophosphate-dependent phosphorylation of a specific serine residue in HPr, a phosphocarrier protein of the phosphoenolpyruvate-dependent sugar phosphotransferase system (PTS). HprK/P also catalyzes the pyrophosphate-producing, inorganic phosphate-dependent dephosphorylation (phosphorolysis) of seryl-phosphorylated HPr (P-Ser-HPr). The two antagonistic activities of HprK/P are regulated by several intracellular metabolites, which change their concentration in response to the absence or presence of rapidly metabolisable carbon sources (glucose, fructose, etc.) in the growth medium. Also phosphorylates/dephosphorylates the HPr-like catabolite repression protein crh on a specific serine residue. Therefore, by controlling the phosphorylation state of HPr and crh, HPrK/P is a sensor enzyme that plays a major role in the regulation of carbon metabolism and sugar transport: it mediates carbon catabolite repression (CCR), and regulates PTS-catalyzed carbohydrate uptake and inducer exclusion. The polypeptide is HPr kinase/phosphorylase (Bacillus anthracis (strain A0248)).